Consider the following 185-residue polypeptide: Recombination protein RecR (185 aa).

The C4-type zinc finger occupies 44-59 (CSVCFHLSSEPVCEIC). The Toprim domain maps to 67-161 (NTICVVADSR…KVTRIAFGLP (95 aa)).

It belongs to the RecR family.

May play a role in DNA repair. It seems to be involved in an RecBC-independent recombinational process of DNA repair. It may act with RecF and RecO. The chain is Recombination protein RecR from Trichormus variabilis (strain ATCC 29413 / PCC 7937) (Anabaena variabilis).